The following is a 371-amino-acid chain: Dead end protein homolog 1 (371 aa).

RRM domains follow at residues 85-163 (PQDI…ALDG) and 165-245 (PGNF…KLRS).

The protein localises to the nucleus. It is found in the cytoplasm. In terms of biological role, RNA-binding factor that positively regulates gene expression by prohibiting miRNA-mediated gene suppression. Relieves miRNA repression in germline cells. Prohibits the function of several miRNAs by blocking the accessibility of target mRNAs. Sequence-specific RNA-binding factor that binds to U-rich regions (URRs) in the 3'untranslated region (3'-UTR) of several mRNAs. Does not bind to miRNAs. May play a role during early embryonic survival. The polypeptide is Dead end protein homolog 1 (dnd1) (Xenopus laevis (African clawed frog)).